A 103-amino-acid polypeptide reads, in one-letter code: Large ribosomal subunit protein bL28 (103 aa).

It belongs to the bacterial ribosomal protein bL28 family.

The protein is Large ribosomal subunit protein bL28 of Anaplasma phagocytophilum (strain HZ).